The following is a 244-amino-acid chain: MIRTDAKDGALVLFSGGQDSATCVAWALERYQTVETLGFDYGQRHRVELECREGVREALKRQFPAWADRLGDDHMIDLSVLGAISDTAMTRAIEIETAANGLPNTFVPGRNLLFMTIAAAIAYRRGLRVLVGGMCETDFSGYPDCRDDTMKALQVALNLGMDTRIVLETPLMWLDKAQTWQLAEQLGGQALVELIRVETHTCYVGERAELHDWGFGCGECPACKLRKRGYEAYLKGERVTEAPL.

Phe14–Val24 serves as a coordination point for ATP. Zn(2+) is bound by residues Cys202, Cys217, Cys220, and Cys223.

This sequence belongs to the QueC family. Zn(2+) is required as a cofactor.

It carries out the reaction 7-carboxy-7-deazaguanine + NH4(+) + ATP = 7-cyano-7-deazaguanine + ADP + phosphate + H2O + H(+). It functions in the pathway purine metabolism; 7-cyano-7-deazaguanine biosynthesis. In terms of biological role, catalyzes the ATP-dependent conversion of 7-carboxy-7-deazaguanine (CDG) to 7-cyano-7-deazaguanine (preQ(0)). The protein is 7-cyano-7-deazaguanine synthase of Burkholderia multivorans (strain ATCC 17616 / 249).